The primary structure comprises 518 residues: Glutamate--cysteine ligase (518 aa).

The protein belongs to the glutamate--cysteine ligase type 1 family. Type 1 subfamily.

It catalyses the reaction L-cysteine + L-glutamate + ATP = gamma-L-glutamyl-L-cysteine + ADP + phosphate + H(+). The protein operates within sulfur metabolism; glutathione biosynthesis; glutathione from L-cysteine and L-glutamate: step 1/2. This is Glutamate--cysteine ligase from Cronobacter sakazakii (strain ATCC BAA-894) (Enterobacter sakazakii).